The chain runs to 111 residues: Large ribosomal subunit protein uL22 (111 aa).

This sequence belongs to the universal ribosomal protein uL22 family. Part of the 50S ribosomal subunit.

This protein binds specifically to 23S rRNA; its binding is stimulated by other ribosomal proteins, e.g. L4, L17, and L20. It is important during the early stages of 50S assembly. It makes multiple contacts with different domains of the 23S rRNA in the assembled 50S subunit and ribosome. Functionally, the globular domain of the protein is located near the polypeptide exit tunnel on the outside of the subunit, while an extended beta-hairpin is found that lines the wall of the exit tunnel in the center of the 70S ribosome. In Geotalea daltonii (strain DSM 22248 / JCM 15807 / FRC-32) (Geobacter daltonii), this protein is Large ribosomal subunit protein uL22.